An 826-amino-acid polypeptide reads, in one-letter code: Ribonucleoside-diphosphate reductase large subunit (826 aa).

Substrate contacts are provided by residues T171, 186 to 187 (SC), G217, 387 to 391 (NLCAE), and 594 to 598 (PTSGC). A disulfide bridge connects residues C187 and C403. The active-site Proton acceptor is N387. C389 serves as the catalytic Cysteine radical intermediate. Catalysis depends on E391, which acts as the Proton acceptor. Residues 747–769 (SVPREEQNERSPAEQMPPRPMEP) are disordered. Over residues 749–758 (PREEQNERSP) the composition is skewed to basic and acidic residues.

This sequence belongs to the ribonucleoside diphosphate reductase large chain family. Heterotetramer composed of a homodimer of the large subunit (R1) and a homodimer of the small subunit (R2). Larger multisubunit protein complex are also active, composed of (R1)n(R2)n.

The enzyme catalyses a 2'-deoxyribonucleoside 5'-diphosphate + [thioredoxin]-disulfide + H2O = a ribonucleoside 5'-diphosphate + [thioredoxin]-dithiol. Its function is as follows. Ribonucleoside-diphosphate reductase holoenzyme provides the precursors necessary for viral DNA synthesis. Allows virus growth in non-dividing cells, as well as reactivation from latency in infected hosts. Catalyzes the biosynthesis of deoxyribonucleotides from the corresponding ribonucleotides. The protein is Ribonucleoside-diphosphate reductase large subunit of Homo sapiens (Human).